A 391-amino-acid chain; its full sequence is Phosphoglycerate kinase (391 aa).

Substrate is bound by residues 21-23 (DLN), Arg-36, 59-62 (HLGR), Arg-113, and Arg-146. Residues Lys-197, Glu-319, and 345 to 348 (GGDT) each bind ATP.

This sequence belongs to the phosphoglycerate kinase family. As to quaternary structure, monomer.

It localises to the cytoplasm. It carries out the reaction (2R)-3-phosphoglycerate + ATP = (2R)-3-phospho-glyceroyl phosphate + ADP. The protein operates within carbohydrate degradation; glycolysis; pyruvate from D-glyceraldehyde 3-phosphate: step 2/5. In Shewanella woodyi (strain ATCC 51908 / MS32), this protein is Phosphoglycerate kinase.